The primary structure comprises 206 residues: Protein-methionine-sulfoxide reductase heme-binding subunit MsrQ (206 aa).

The next 6 helical transmembrane spans lie at 14–34 (IKPL…WLGA), 45–65 (FLTR…LAIT), 82–102 (MCGL…VWWD), 118–138 (PFIT…ATST), 149–169 (WQVL…HFWW), and 179–199 (QPLL…AAWW).

This sequence belongs to the MsrQ family. Heterodimer of a catalytic subunit (MsrP) and a heme-binding subunit (MsrQ). Requires FMN as cofactor. Heme b is required as a cofactor.

The protein resides in the cell inner membrane. In terms of biological role, part of the MsrPQ system that repairs oxidized periplasmic proteins containing methionine sulfoxide residues (Met-O), using respiratory chain electrons. Thus protects these proteins from oxidative-stress damage caused by reactive species of oxygen and chlorine generated by the host defense mechanisms. MsrPQ is essential for the maintenance of envelope integrity under bleach stress, rescuing a wide series of structurally unrelated periplasmic proteins from methionine oxidation. MsrQ provides electrons for reduction to the reductase catalytic subunit MsrP, using the quinone pool of the respiratory chain. The chain is Protein-methionine-sulfoxide reductase heme-binding subunit MsrQ from Bordetella bronchiseptica (strain ATCC BAA-588 / NCTC 13252 / RB50) (Alcaligenes bronchisepticus).